The sequence spans 866 residues: Dimethylglycine dehydrogenase, mitochondrial (866 aa).

A mitochondrion-targeting transit peptide spans 1–50 (MLRPGAQLLRGLLLRSCPLQGSPGRPRSVCGREGEEKPPLSAETQWKDRA). A disordered region spans residues 20–42 (QGSPGRPRSVCGREGEEKPPLSA). FAD is bound by residues 59 to 60 (CV), 80 to 81 (EK), and 87 to 95 (GSTWHAAGL). H91 is subject to Tele-8alpha-FAD histidine. Residue K114 is modified to N6-acetyllysine. K148 is modified (N6-acetyllysine; alternate). An N6-succinyllysine; alternate modification is found at K148. An N6-acetyllysine modification is found at K168. V219 is an FAD binding site. K223 carries the post-translational modification N6-acetyllysine. FAD is bound at residue W251. Residues K317 and K319 each carry the N6-succinyllysine modification. N6-acetyllysine occurs at positions 335 and 360. An FAD-binding site is contributed by 397–402 (FGYGII). K434 and K523 each carry N6-acetyllysine; alternate. Residues K434 and K523 each carry the N6-succinyllysine; alternate modification. 580–582 (ELT) provides a ligand contact to (6S)-5,6,7,8-tetrahydrofolate. K655 bears the N6-acetyllysine; alternate mark. K655 is subject to N6-succinyllysine; alternate. (6S)-5,6,7,8-tetrahydrofolate contacts are provided by residues Y676, 683 to 685 (ELY), and Y744. Residue K764 is modified to N6-acetyllysine. K795 carries the post-translational modification N6-succinyllysine.

It belongs to the GcvT family. As to quaternary structure, monomer. FAD serves as cofactor.

Its subcellular location is the mitochondrion. It catalyses the reaction (6S)-5,6,7,8-tetrahydrofolyl-(gamma-L-Glu)(n) + N,N-dimethylglycine + oxidized [electron-transfer flavoprotein] + H(+) = (6R)-5,10-methylenetetrahydrofolyl-(gamma-L-Glu)(n) + sarcosine + reduced [electron-transfer flavoprotein]. Its pathway is amine and polyamine degradation; betaine degradation; sarcosine from betaine: step 2/2. In terms of biological role, catalyzes the demethylation of N,N-dimethylglycine to sarcosine. Also has activity with sarcosine in vitro. This is Dimethylglycine dehydrogenase, mitochondrial (DMGDH) from Homo sapiens (Human).